A 205-amino-acid chain; its full sequence is Small ribosomal subunit protein uS4 (205 aa).

The segment at 18–49 (NIWGRPKSPVNKREYGPGQHGQRRKGKLSDFG) is disordered. The region spanning 94–157 (RRLDTVVYRA…KQLALVLEAN (64 aa)) is the S4 RNA-binding domain.

It belongs to the universal ribosomal protein uS4 family. In terms of assembly, part of the 30S ribosomal subunit. Contacts protein S5. The interaction surface between S4 and S5 is involved in control of translational fidelity.

Its function is as follows. One of the primary rRNA binding proteins, it binds directly to 16S rRNA where it nucleates assembly of the body of the 30S subunit. Functionally, with S5 and S12 plays an important role in translational accuracy. This Nitrobacter hamburgensis (strain DSM 10229 / NCIMB 13809 / X14) protein is Small ribosomal subunit protein uS4.